The chain runs to 330 residues: DNA-directed RNA polymerase subunit alpha (330 aa).

An alpha N-terminal domain (alpha-NTD) region spans residues 1-231; it reads MAILAFQKPD…IYHFMLFSDE (231 aa). An alpha C-terminal domain (alpha-CTD) region spans residues 253-330; that stretch reads MRQLLKTKLV…DISKYKLDKE (78 aa).

It belongs to the RNA polymerase alpha chain family. In terms of assembly, homodimer. The RNAP catalytic core consists of 2 alpha, 1 beta, 1 beta' and 1 omega subunit. When a sigma factor is associated with the core the holoenzyme is formed, which can initiate transcription.

It catalyses the reaction RNA(n) + a ribonucleoside 5'-triphosphate = RNA(n+1) + diphosphate. In terms of biological role, DNA-dependent RNA polymerase catalyzes the transcription of DNA into RNA using the four ribonucleoside triphosphates as substrates. The chain is DNA-directed RNA polymerase subunit alpha from Phocaeicola vulgatus (strain ATCC 8482 / DSM 1447 / JCM 5826 / CCUG 4940 / NBRC 14291 / NCTC 11154) (Bacteroides vulgatus).